We begin with the raw amino-acid sequence, 368 residues long: Homoserine O-acetyltransferase (368 aa).

One can recognise an AB hydrolase-1 domain in the interval 44 to 350 (NAILVAHAWT…AYGHDAFLLE (307 aa)). The active-site Nucleophile is the Ser150. Residue Arg217 participates in substrate binding. Residues Asp311 and His344 contribute to the active site. Substrate is bound at residue Asp345.

Belongs to the AB hydrolase superfamily. MetX family. In terms of assembly, homodimer.

It localises to the cytoplasm. It carries out the reaction L-homoserine + acetyl-CoA = O-acetyl-L-homoserine + CoA. It functions in the pathway amino-acid biosynthesis; L-methionine biosynthesis via de novo pathway; O-acetyl-L-homoserine from L-homoserine: step 1/1. Functionally, transfers an acetyl group from acetyl-CoA to L-homoserine, forming acetyl-L-homoserine. The sequence is that of Homoserine O-acetyltransferase from Geobacter sulfurreducens (strain ATCC 51573 / DSM 12127 / PCA).